A 725-amino-acid polypeptide reads, in one-letter code: MADEDLIFRLEGVDGGQSPRAGHDGDSDGDSDDEEGYFICPITDDPSSNQNVNSKVNKYYSNLTKSERYSSSGSPANSFHFKEAWKHAIQKAKHMPDPWAEFHLEDIATERATRHRYNAVTGEWLDDEVLIKMASQPFGRGAMRECFRTKKLSNFLHAQQWKGASNYVAKRYIEPVDRDVYFEDVRLQMEAKLWGEEYNRHKPPKQVDIMQMCIIELKDRPGKPLFHLEHYIEGKYIKYNSNSGFVRDDNIRLTPQAFSHFTFERSGHQLIVVDIQGVGDLYTDPQIHTETGTDFGDGNLGVRGMALFFYSHACNRICESMGLAPFDLSPRERDAVNQNTKLLQSAKTILRGTEEKCGSPQVRTLSGSRPPLLRPLSENSGDENMSDVTFDSLPSSPSSATPHSQKLDHLHWPVFSDLDNMASRDHDHLDNHRESENSGDSGYPSEKRGELDDPEPREHGHSYSNRKYESDEDSLGSSGRVCVEKWNLLNSSRLHLPRASAVALEVQRLNALDLEKKIGKSILGKVHLAMVRYHEGGRFCEKGEEWDQESAVFHLEHAANLGELEAIVGLGLMYSQLPHHILADVSLKETEENKTKGFDYLLKAAEAGDRQSMILVARAFDSGQNLSPDRCQDWLEALHWYNTALEMTDCDEGGEYDGMQDEPRYMMLAREAEMLFTGGYGLEKDPQRSGDLYTQAAEAAMEAMKGRLANQYYQKAEEAWAQMEE.

Residues 1 to 12 (MADEDLIFRLEG) are compositionally biased toward basic and acidic residues. The tract at residues 1–38 (MADEDLIFRLEGVDGGQSPRAGHDGDSDGDSDDEEGYF) is disordered. At Ala2 the chain carries N-acetylalanine. Ser18 and Ser27 each carry phosphoserine. Acidic residues predominate over residues 27-36 (SDGDSDDEEG). Phosphoserine; by autocatalysis is present on residues Ser61 and Ser66. Phosphoserine is present on residues Ser70, Ser71, Ser72, and Ser74. Phosphoserine; by autocatalysis and TRPM7 is present on Ser78. Residues 81 to 94 (FKEAWKHAIQKAKH) are calmodulin-binding. The 211-residue stretch at 116-326 (RYNAVTGEWL…ICESMGLAPF (211 aa)) folds into the Alpha-type protein kinase domain. Ser243 carries the post-translational modification Phosphoserine. Residue 296 to 302 (GDGNLGV) participates in ATP binding. A phosphothreonine; by autocatalysis mark is found at Thr348 and Thr353. 2 disordered regions span residues 352-405 (GTEE…PHSQ) and 423-477 (SRDH…SLGS). The residue at position 359 (Ser359) is a Phosphoserine; by MAPK13 and CDK1. Residues 363–377 (RTLSGSRPPLLRPLS) are compositionally biased toward low complexity. Phosphoserine; by autocatalysis, RPS6KA1 and RPS6KB1 is present on Ser366. Positions 386-404 (SDVTFDSLPSSPSSATPHS) are enriched in polar residues. Residue Ser392 is modified to Phosphoserine. At Ser398 the chain carries Phosphoserine; by AMPK. 2 stretches are compositionally biased toward basic and acidic residues: residues 423-436 (SRDH…RESE) and 445-469 (SEKR…RKYE). Ser435 is modified (phosphoserine). Phosphoserine; by autocatalysis is present on Ser445. The residue at position 470 (Ser470) is a Phosphoserine. Residue Ser474 is modified to Phosphoserine; by autocatalysis. Ser477 is subject to Phosphoserine. At Ser491 the chain carries Phosphoserine; by autocatalysis. Phosphoserine; by PKA is present on Ser500.

The protein belongs to the protein kinase superfamily. Alpha-type protein kinase family. As to quaternary structure, monomer or homodimer. Interacts with Calmodulin/CALM1; this interaction is strictly required for phosphorylation activity. Post-translationally, autophosphorylated at multiple residues, Thr-348 being the major site. Phosphorylated by AMP-activated protein kinase AMPK at Ser-398 leading to EEF2K activation and protein synthesis inhibition. Phosphorylated by TRPM7 at Ser-78 resulting in improved protein stability, higher EE2F phosphorylated and subsequently reduced rate of protein synthesis. Phosphorylation by other kinases such as CDK1 and MAPK13 at Ser-359 or RPS6KA1 and RPS6KB1 at Ser-366 instead decrease EEF2K activity and promote protein synthesis.

It carries out the reaction [translation elongation factor 2] + ATP = [translation elongation factor 2]-phosphate + ADP + H(+). With respect to regulation, undergoes calcium/calmodulin-dependent intramolecular autophosphorylation, and this results in it becoming partially calcium/calmodulin-independent. In terms of biological role, threonine kinase that regulates protein synthesis by controlling the rate of peptide chain elongation. Upon activation by a variety of upstream kinases including AMPK or TRPM7, phosphorylates the elongation factor EEF2 at a single site, renders it unable to bind ribosomes and thus inactive. In turn, the rate of protein synthesis is reduced. The sequence is that of Eukaryotic elongation factor 2 kinase (EEF2K) from Homo sapiens (Human).